Consider the following 638-residue polypeptide: MSRDIFMKRLRLHLLFDEVAMVTHIVGDVLSSVLLCAVVLLVLVGNTLVVAAVATSRKLRTVTNVFIVNLACADLLLGVLVLPFSAVNEIKDVWIFGHVWCQVWLAVDVWLCTASILNLCCISLDRYLAITRPIRYPGLMSAKRAKTLVAGVWLFSFVICCPPLIGWNDGGDGIMDYNGTTATPIPVTTTQTPVTGRDDVLCDNGFNYSTNSNMNTTCTYSGDSSLSTTCELTNSRGYRIYAALGSFFIPMLVMVFFYLQIYRAAVKTISAYAKGELKTKYSVRENGSKTNSVTLRIHRGGRGPSTGSSVYRHGSTYGGSAAGAATREGCGDKDAAGGRRFGRQEMDSHLPVRKCRSSDASLVTLTGLKCEIIDNGNAKHGPISELIKGRGKSFFWRKEKKRSVGGERESFENSTRNGRSTRAKLCGGRCLAIETDICSSGECSPRTKRIKEHARATQHNSLPVTPSLSSQNEETDAVFVRGTSNSEYKPRRSRLSAHKPGHAMRLHMQKFNREKKAAKTLAIIVGAFIMCWMPFFTIYLVGAFCENCISPIVFSVAFWLGYCNSAMNPCVYALFSRDFRFAFRKLLTCSCKAWSKNRSFRPQTSDVPAIQLHCATQDDAKSSSDIGPTASGGNGGYT.

The Extracellular portion of the chain corresponds to 1–28 (MSRDIFMKRLRLHLLFDEVAMVTHIVGD). The chain crosses the membrane as a helical span at residues 29-53 (VLSSVLLCAVVLLVLVGNTLVVAAV). At 54–64 (ATSRKLRTVTN) the chain is on the cytoplasmic side. A helical membrane pass occupies residues 65–87 (VFIVNLACADLLLGVLVLPFSAV). Residues 88 to 102 (NEIKDVWIFGHVWCQ) are Extracellular-facing. C101 and C230 are oxidised to a cystine. Residues 103-124 (VWLAVDVWLCTASILNLCCISL) traverse the membrane as a helical segment. At 125-147 (DRYLAITRPIRYPGLMSAKRAKT) the chain is on the cytoplasmic side. The helical transmembrane segment at 148-167 (LVAGVWLFSFVICCPPLIGW) threads the bilayer. At 168–239 (NDGGDGIMDY…CELTNSRGYR (72 aa)) the chain is on the extracellular side. N-linked (GlcNAc...) asparagine glycans are attached at residues N178, N207, and N215. Residues 240-259 (IYAALGSFFIPMLVMVFFYL) traverse the membrane as a helical segment. Topologically, residues 260-520 (QIYRAAVKTI…FNREKKAAKT (261 aa)) are cytoplasmic. Residues 521–545 (LAIIVGAFIMCWMPFFTIYLVGAFC) form a helical membrane-spanning segment. The Extracellular segment spans residues 546–551 (ENCISP). The helical transmembrane segment at 552-575 (IVFSVAFWLGYCNSAMNPCVYALF) threads the bilayer. The Cytoplasmic portion of the chain corresponds to 576–638 (SRDFRFAFRK…TASGGNGGYT (63 aa)). The disordered stretch occupies residues 618–638 (DDAKSSSDIGPTASGGNGGYT).

It belongs to the G-protein coupled receptor 1 family. As to expression, expressed in the central nervous system.

It localises to the cell membrane. Functionally, G-protein coupled receptor for octopamine (OA), which is a neurotransmitter, neurohormone, and neuromodulator in invertebrates. Activation of this receptor by octopamine induces an increase in both inositol phosphates and cyclic AMP. The coupling to adenylyl cyclase seems to be less efficient than the coupling to phospholipase C. The rank order of potency for agonists is p-synephrine &gt;= clonidine &gt; p-octopamine = xylometazoline = phenylephrine = oxymetazoline &gt; B-HT920 &gt; serotonin = p-tyramine &gt; epinephrine &gt; norepinephrine &gt; methoxamine = dopamine = histamine. For antagonists, the rank order is yohimbine &gt; chlopromazine / spiperone &gt; phentolamine &gt; mianserine &gt; rauwolscine &gt; prazosin &gt; alprenolol / propanolol &gt; pindolol. The sequence is that of Octopamine receptor 1 from Lymnaea stagnalis (Great pond snail).